The sequence spans 729 residues: Polyphosphate kinase (729 aa).

A disordered region spans residues 1–46 (MTEAQTRTEPSESSESSEAVAPAITSAADSAPEAPPATTAPAIENP). Low complexity predominate over residues 25–42 (TSAADSAPEAPPATTAPA). Residue N90 participates in ATP binding. Positions 422 and 452 each coordinate Mg(2+). Catalysis depends on H482, which acts as the Phosphohistidine intermediate. 3 residues coordinate ATP: Y515, R611, and H639.

The protein belongs to the polyphosphate kinase 1 (PPK1) family. It depends on Mg(2+) as a cofactor. Post-translationally, an intermediate of this reaction is the autophosphorylated ppk in which a phosphate is covalently linked to a histidine residue through a N-P bond.

It carries out the reaction [phosphate](n) + ATP = [phosphate](n+1) + ADP. Catalyzes the reversible transfer of the terminal phosphate of ATP to form a long-chain polyphosphate (polyP). This chain is Polyphosphate kinase, found in Mycolicibacterium gilvum (strain PYR-GCK) (Mycobacterium gilvum (strain PYR-GCK)).